The chain runs to 422 residues: Tyrosine--tRNA ligase 1 (422 aa).

L-tyrosine is bound at residue Y36. Residues 41 to 50 (PTAGSLHIGH) carry the 'HIGH' region motif. L-tyrosine-binding residues include Y173 and Q177. Residues 233–237 (KFGKT) carry the 'KMSKS' region motif. K236 provides a ligand contact to ATP. One can recognise an S4 RNA-binding domain in the interval 355–419 (SDVVTLLLET…GKKQFAMVKL (65 aa)).

This sequence belongs to the class-I aminoacyl-tRNA synthetase family. TyrS type 1 subfamily. In terms of assembly, homodimer.

It localises to the cytoplasm. The catalysed reaction is tRNA(Tyr) + L-tyrosine + ATP = L-tyrosyl-tRNA(Tyr) + AMP + diphosphate + H(+). In terms of biological role, catalyzes the attachment of tyrosine to tRNA(Tyr) in a two-step reaction: tyrosine is first activated by ATP to form Tyr-AMP and then transferred to the acceptor end of tRNA(Tyr). The chain is Tyrosine--tRNA ligase 1 from Vibrio vulnificus (strain YJ016).